The chain runs to 436 residues: Tol-Pal system protein TolB (436 aa).

Residues 1–28 (MRSFLKPLLTIAAMALGMTAVIPMPAWA) form the signal peptide.

This sequence belongs to the TolB family. The Tol-Pal system is composed of five core proteins: the inner membrane proteins TolA, TolQ and TolR, the periplasmic protein TolB and the outer membrane protein Pal. They form a network linking the inner and outer membranes and the peptidoglycan layer.

It is found in the periplasm. Functionally, part of the Tol-Pal system, which plays a role in outer membrane invagination during cell division and is important for maintaining outer membrane integrity. This chain is Tol-Pal system protein TolB, found in Mesorhizobium japonicum (strain LMG 29417 / CECT 9101 / MAFF 303099) (Mesorhizobium loti (strain MAFF 303099)).